The following is a 643-amino-acid chain: Manganese lipoxygenase (643 aa).

Residues 166–643 form the Lipoxygenase domain; the sequence is WYTDEVFAQQ…PEQLANAIVI (478 aa). Positions 325, 330, 510, 514, and 643 each coordinate Mn(2+).

This sequence belongs to the lipoxygenase family. Mn(2+) serves as cofactor.

The enzyme catalyses (9Z,12Z)-octadecadienoate + O2 = (13S)-hydroperoxy-(9Z,11E)-octadecadienoate. Functionally, lipoxygenase that metabolizes linoleic and alpha-linolenic acids to 13S-hydroperoxy fatty acids. This chain is Manganese lipoxygenase, found in Pleurotus sapidus (Oyster mushroom).